The primary structure comprises 459 residues: NADH oxidase (459 aa).

Residue asparagine 10 coordinates FAD. Catalysis depends on histidine 11, which acts as the Proton acceptor. Residues alanine 12, aspartate 34, glutamine 35, cysteine 44, valine 81, alanine 110, serine 113, lysine 143, and tyrosine 172 each contribute to the FAD site. The Redox-active role is filled by cysteine 44. The residue at position 44 (cysteine 44) is a Cysteine sulfinic acid (-SO2H). Residues isoleucine 173, aspartate 192, tyrosine 201, and glycine 256 each coordinate NAD(+). Aspartate 294 serves as a coordination point for FAD. Alanine 310 serves as a coordination point for NAD(+). Residues leucine 311, alanine 312, and serine 313 each contribute to the FAD site. Residue glycine 341 participates in NAD(+) binding. Position 439 (phenylalanine 439) interacts with FAD.

Belongs to the class-III pyridine nucleotide-disulfide oxidoreductase family. The cofactor is FAD.

The protein localises to the secreted. Its subcellular location is the cell wall. The catalysed reaction is 2 NADH + O2 + 2 H(+) = 2 NAD(+) + 2 H2O. Functionally, catalyzes the four-electron reduction of molecular oxygen to water. Plays a role in redox balance maintenance. May be involved in mediating bacterial adhesion to host cells. May be considered a potential virulence factor. This Streptococcus pneumoniae serotype 4 (strain ATCC BAA-334 / TIGR4) protein is NADH oxidase.